The following is a 488-amino-acid chain: Prostaglandin E2 receptor EP4 subtype (488 aa).

At 1–19 (MSIPGVNASFSSTPERLNS) the chain is on the extracellular side. N-linked (GlcNAc...) asparagine glycosylation is present at N7. Residues 20-43 (PVTIPAVMFIFGVVGNLVAIVVLC) form a helical membrane-spanning segment. The Cytoplasmic portion of the chain corresponds to 44–55 (KSRKEQKETTFY). A helical transmembrane segment spans residues 56-79 (TLVCGLAVTDLLGTLLVSPVTIAT). The Extracellular segment spans residues 80–96 (YMKGQWPGDQALCDYST). Residues C92 and C170 are joined by a disulfide bond. A helical transmembrane segment spans residues 97 to 115 (FILLFFGLSGLSIICAMSI). At 116-135 (ERYLAINHAYFYSHYVDKRL) the chain is on the cytoplasmic side. Residues 136-160 (AGLTLFAVYASNVLFCALPNMGLGR) form a helical membrane-spanning segment. Topologically, residues 161–184 (SERQYPGTWCFIDWTTNVTAYAAF) are extracellular. The chain crosses the membrane as a helical span at residues 185 to 211 (SYMYAGFSSFLILATVLCNVLVCGALL). At 212-270 (RMLRQFMRRTSLGTEQHHAAAAAAVASVACRGHAAASPALQRLSDFRRRRSFRRIAGAE) the chain is on the cytoplasmic side. A helical membrane pass occupies residues 271–298 (IQMVILLIATSLVVLICSIPLVVRVFIN). Residues 299 to 315 (QLYQPSVVKDISRNPDL) lie on the Extracellular side of the membrane. Residues 316 to 335 (QAIRIASVNPILDPWIYILL) form a helical membrane-spanning segment. Over 336-488 (RKTVLSKAIE…ETLKLSEKCI (153 aa)) the chain is Cytoplasmic. Residues 358-380 (GRDGSAQHCSESRRTSSAMSGHS) form a disordered region. S377, S380, S382, and S385 each carry phosphoserine.

Belongs to the G-protein coupled receptor 1 family. Interacts with FEM1A. In terms of processing, phosphorylation mediates agonist-mediated desensitization by promoting cytoplasmic retention.

Its subcellular location is the cell membrane. Its function is as follows. Receptor for prostaglandin E2 (PGE2). The activity of this receptor is mediated by G(s) proteins that stimulate adenylate cyclase. Has a relaxing effect on smooth muscle. May play an important role in regulating renal hemodynamics, intestinal epithelial transport, adrenal aldosterone secretion, and uterine function. This chain is Prostaglandin E2 receptor EP4 subtype (Ptger4), found in Rattus norvegicus (Rat).